The primary structure comprises 147 residues: Hemoglobin subunit beta-1 (147 aa).

One can recognise a Globin domain in the interval 3–147; that stretch reads EWTDKERSII…VVSALGKQYH (145 aa). Positions 64 and 93 each coordinate heme b.

The protein belongs to the globin family. Heterotetramer of two alpha chains and two beta chains. In terms of tissue distribution, red blood cells.

Functionally, involved in oxygen transport from gills to the various peripheral tissues. In Pagothenia borchgrevinki (Bald rockcod), this protein is Hemoglobin subunit beta-1 (hbb1).